The sequence spans 536 residues: Bicoumarin synthase desC (536 aa).

Residues 12–32 traverse the membrane as a helical segment; it reads YVALAGITGFFLVFLGFLVVI. 2 N-linked (GlcNAc...) asparagine glycosylation sites follow: Asn149 and Asn371. Position 480 (Cys480) interacts with heme.

This sequence belongs to the cytochrome P450 family. It depends on heme as a cofactor.

The protein resides in the membrane. It carries out the reaction 2 7-demethylsiderin + NADPH + O2 = desertorin A + NADP(+) + 2 H2O. Its pathway is secondary metabolite biosynthesis. Functionally, non-reducing polyketide synthase; part of the gene cluster that mediates the biosynthesis of the bicoumarin desertorin. The non-reducing polyketide synthase desS first catalyzes the formation of the pentaketidic 4,7-dihydroxy-5-methylcoumarin from acetyl coenzyme A and 4 malonyl coenzyme A molecules. Further O-methylation by desB leads to the formation of 7-demethylsiderin. Then, an oxidative phenol coupling catalyzed by the cytochrome P450 monooxygenase desC forms the 6,8'-dimer M-desertorin A via dimerization the monomeric precursor, 7-demethylsiderin. M-desertorin A is further converted to M-desertorin C. In Aspergillus desertorum (Emericella desertorum), this protein is Bicoumarin synthase desC.